We begin with the raw amino-acid sequence, 689 residues long: Beta-adrenergic receptor kinase 1 (689 aa).

The N-terminal stretch occupies residues 1–190 (MADLEAVLAD…ELNIHLTMND (190 aa)). The RGS domain occupies 54-175 (TFEKIFSQKL…IESDKFTRFC (122 aa)). The 263-residue stretch at 191–453 (FSVHRIIGRG…AQEIKESPFF (263 aa)) folds into the Protein kinase domain. ATP contacts are provided by residues 197–205 (IGRGGFGEV) and K220. D317 serves as the catalytic Proton acceptor. Positions 454-521 (RSLDWQMVFL…TISERWQQEV (68 aa)) constitute an AGC-kinase C-terminal domain. A PH domain is found at 558-652 (DCIMHGYMSK…WKKELRDAYR (95 aa)). The residue at position 670 (S670) is a Phosphoserine.

The protein belongs to the protein kinase superfamily. AGC Ser/Thr protein kinase family. GPRK subfamily. As to quaternary structure, interacts with the heterodimer formed by GNB1 and GNG2. Interacts with GIT1. Interacts with, and phosphorylates chemokine-stimulated CCR5. Interacts with ARRB1. Interacts with LPAR1 and LPAR2. Interacts with RALA in response to LPAR1 activation. ADRBK1 and RALA mutually inhibit each other's binding to LPAR1. Interacts with ADRB2. Expressed at low levels in brain cortex, hippocampus, striatum, hypothalamus, cerebellum and brainstem (at protein level).

It localises to the cytoplasm. It is found in the cell membrane. Its subcellular location is the postsynapse. The protein resides in the presynapse. The catalysed reaction is [beta-adrenergic receptor] + ATP = [beta-adrenergic receptor]-phosphate + ADP + H(+). With respect to regulation, in contrast to other AGC family kinases, the catalytic activity is solely regulated by the binding of substrates and ligands, not by phosphorylation of the kinase domain. Its function is as follows. Specifically phosphorylates the agonist-occupied form of the beta-adrenergic and closely related receptors, probably inducing a desensitization of them. Key regulator of LPAR1 signaling. Competes with RALA for binding to LPAR1 thus affecting the signaling properties of the receptor. Desensitizes LPAR1 and LPAR2 in a phosphorylation-independent manner. Positively regulates ciliary smoothened (SMO)-dependent Hedgehog (Hh) signaling pathway by facilitating the trafficking of SMO into the cilium and the stimulation of SMO activity. Inhibits relaxation of airway smooth muscle in response to blue light. In Rattus norvegicus (Rat), this protein is Beta-adrenergic receptor kinase 1.